The sequence spans 539 residues: Glucose-6-phosphate isomerase (539 aa).

The active-site Proton donor is the glutamate 353. Active-site residues include histidine 384 and lysine 505.

It belongs to the GPI family.

Its subcellular location is the cytoplasm. It carries out the reaction alpha-D-glucose 6-phosphate = beta-D-fructose 6-phosphate. The protein operates within carbohydrate biosynthesis; gluconeogenesis. Its pathway is carbohydrate degradation; glycolysis; D-glyceraldehyde 3-phosphate and glycerone phosphate from D-glucose: step 2/4. Its function is as follows. Catalyzes the reversible isomerization of glucose-6-phosphate to fructose-6-phosphate. The chain is Glucose-6-phosphate isomerase from Ralstonia pickettii (strain 12J).